The following is a 1372-amino-acid chain: DNA-directed RNA polymerase subunit beta' (1372 aa).

Residues cysteine 69, cysteine 71, cysteine 84, and cysteine 87 each contribute to the Zn(2+) site. Positions 460, 462, and 464 each coordinate Mg(2+). Zn(2+) is bound by residues cysteine 808, cysteine 882, cysteine 889, and cysteine 892.

The protein belongs to the RNA polymerase beta' chain family. The RNAP catalytic core consists of 2 alpha, 1 beta, 1 beta' and 1 omega subunit. When a sigma factor is associated with the core the holoenzyme is formed, which can initiate transcription. The cofactor is Mg(2+). Zn(2+) is required as a cofactor.

The catalysed reaction is RNA(n) + a ribonucleoside 5'-triphosphate = RNA(n+1) + diphosphate. DNA-dependent RNA polymerase catalyzes the transcription of DNA into RNA using the four ribonucleoside triphosphates as substrates. This chain is DNA-directed RNA polymerase subunit beta', found in Rickettsia felis (strain ATCC VR-1525 / URRWXCal2) (Rickettsia azadi).